A 292-amino-acid polypeptide reads, in one-letter code: E3 ubiquitin-protein ligase trim-21 (292 aa).

The segment at Cys6 to Arg52 adopts an RING-type zinc-finger fold. Residues Asn90–Leu137 form a B box-type zinc finger. Positions 95, 98, 123, and 129 each coordinate Zn(2+). Residues Ile152–Leu179 are a coiled coil.

The protein belongs to the TRIM/RBCC family. In terms of assembly, interacts with E2 ubiquitin-conjugating enzyme ubc-21. Interacts with ced-6; this mediates interaction of trim-21 with ced-1 and is required for ced-1 ubiquitination. Interacts with nck-1; the interaction is required for ced-1 ubiquitination. In early larva, observed mainly in pharyngeal and body wall muscle cells.

The protein resides in the cytoplasm. It catalyses the reaction S-ubiquitinyl-[E2 ubiquitin-conjugating enzyme]-L-cysteine + [acceptor protein]-L-lysine = [E2 ubiquitin-conjugating enzyme]-L-cysteine + N(6)-ubiquitinyl-[acceptor protein]-L-lysine.. It functions in the pathway protein modification; protein ubiquitination. Functionally, E3 ubiquitin-protein ligase which catalyzes 'Lys-48'-linked polyubiquitination of ced-1, promoting its proteasomal degradation to maintain appropriate ced-1 levels for apoptotic cell clearance. Acts together with E2 ubiquitin-conjugating enzyme ubc-21. This Caenorhabditis elegans protein is E3 ubiquitin-protein ligase trim-21.